The chain runs to 342 residues: Phosphate acyltransferase (342 aa).

Belongs to the PlsX family. As to quaternary structure, homodimer. Probably interacts with PlsY.

Its subcellular location is the cytoplasm. It catalyses the reaction a fatty acyl-[ACP] + phosphate = an acyl phosphate + holo-[ACP]. It participates in lipid metabolism; phospholipid metabolism. In terms of biological role, catalyzes the reversible formation of acyl-phosphate (acyl-PO(4)) from acyl-[acyl-carrier-protein] (acyl-ACP). This enzyme utilizes acyl-ACP as fatty acyl donor, but not acyl-CoA. This Shewanella putrefaciens (strain CN-32 / ATCC BAA-453) protein is Phosphate acyltransferase.